The sequence spans 476 residues: MKVTLPAFEKARVLVVGDVMLDRYWVGPTGRISPEAPVPVVRINQIEDRPGGAANVALNIAALGGKVQLSGLVGQDDTADALTRGVQALGVEPHWLVVEDKPTITKLRVLSRNQQLIRLDFEEAFDKHSSDALLNQAQARLDDVDVVILSDYAKGAVGEPADFIASARAKGVKVLVDPKGSDFARYRGATLLTPNMSEFEAVVGTVTSEADLVDKAQKLLQDLALDALLVTRSEKGMTLITPNAPELHIPTVAREVYDVTGAGDTVISALATALGAGAELPQACAIANTAAGVVVGKLGTSTVSRIELIEALKSHQGESGIGVVSEDQLVYALEQAKLRGERVVMTNGCFDILHAGHVSYLAQAKALGDRLIVAVNDDDSVRRLKGDGRPVNSVDRRMAVLAGLASVDWVVPFSEDTPQRVIARLLPDLLVKGGDYKVEDIAGGAEVIANGGQVKVLGFEDGVSTTAIIQNIMSRH.

The segment at 1-319 is ribokinase; sequence MKVTLPAFEK…EALKSHQGES (319 aa). 195–198 contacts ATP; that stretch reads NMSE. The active site involves Asp-264. Positions 345–476 are cytidylyltransferase; it reads MTNGCFDILH…AIIQNIMSRH (132 aa).

This sequence in the N-terminal section; belongs to the carbohydrate kinase PfkB family. In the C-terminal section; belongs to the cytidylyltransferase family. As to quaternary structure, homodimer.

It carries out the reaction D-glycero-beta-D-manno-heptose 7-phosphate + ATP = D-glycero-beta-D-manno-heptose 1,7-bisphosphate + ADP + H(+). The enzyme catalyses D-glycero-beta-D-manno-heptose 1-phosphate + ATP + H(+) = ADP-D-glycero-beta-D-manno-heptose + diphosphate. It functions in the pathway nucleotide-sugar biosynthesis; ADP-L-glycero-beta-D-manno-heptose biosynthesis; ADP-L-glycero-beta-D-manno-heptose from D-glycero-beta-D-manno-heptose 7-phosphate: step 1/4. Its pathway is nucleotide-sugar biosynthesis; ADP-L-glycero-beta-D-manno-heptose biosynthesis; ADP-L-glycero-beta-D-manno-heptose from D-glycero-beta-D-manno-heptose 7-phosphate: step 3/4. Its function is as follows. Catalyzes the phosphorylation of D-glycero-D-manno-heptose 7-phosphate at the C-1 position to selectively form D-glycero-beta-D-manno-heptose-1,7-bisphosphate. Functionally, catalyzes the ADP transfer from ATP to D-glycero-beta-D-manno-heptose 1-phosphate, yielding ADP-D-glycero-beta-D-manno-heptose. This chain is Bifunctional protein HldE, found in Shewanella amazonensis (strain ATCC BAA-1098 / SB2B).